A 261-amino-acid polypeptide reads, in one-letter code: Cytochrome c oxidase subunit 3 (261 aa).

Residues 1–15 (MAHQAHAYHMVDPSP) are Mitochondrial matrix-facing. The chain crosses the membrane as a helical span at residues 16–34 (WPLTGAVAALLLTSGLAVW). The Mitochondrial intermembrane portion of the chain corresponds to 35 to 40 (FHFKSL). A helical membrane pass occupies residues 41-66 (TLLAMGLLLMILTMIQWWRDIIREGT). At 67–72 (FQGHHT) the chain is on the mitochondrial matrix side. Residues 73 to 105 (PPVQKGLRYGMILFITSEVFFFLGFFWAFYHSS) traverse the membrane as a helical segment. Residues 106–128 (LAPTPELGGIWPPTGITPLDPFE) are Mitochondrial intermembrane-facing. The chain crosses the membrane as a helical span at residues 129 to 152 (VPLLNTAVLLASGVTVTWTHHSLM). The Mitochondrial matrix portion of the chain corresponds to 153 to 155 (EGK). Residues 156–183 (RTEATQALTLTILLGLYFTALQAMEYYE) form a helical membrane-spanning segment. Residues 184–190 (APFTIAD) are Mitochondrial intermembrane-facing. Residues 191 to 223 (GVYGTTFFVATGFHGLHVIIGSTFLAGCLLRQI) form a helical membrane-spanning segment. Residues 224 to 232 (LYHFTSSHH) lie on the Mitochondrial matrix side of the membrane. Residues 233 to 256 (FGFEAAAWYWHFVDVVWLFLYVSI) form a helical membrane-spanning segment. The Mitochondrial intermembrane portion of the chain corresponds to 257–261 (YWWGS).

The protein belongs to the cytochrome c oxidase subunit 3 family. As to quaternary structure, component of the cytochrome c oxidase (complex IV, CIV), a multisubunit enzyme composed of 14 subunits. The complex is composed of a catalytic core of 3 subunits MT-CO1, MT-CO2 and MT-CO3, encoded in the mitochondrial DNA, and 11 supernumerary subunits COX4I, COX5A, COX5B, COX6A, COX6B, COX6C, COX7A, COX7B, COX7C, COX8 and NDUFA4, which are encoded in the nuclear genome. The complex exists as a monomer or a dimer and forms supercomplexes (SCs) in the inner mitochondrial membrane with NADH-ubiquinone oxidoreductase (complex I, CI) and ubiquinol-cytochrome c oxidoreductase (cytochrome b-c1 complex, complex III, CIII), resulting in different assemblies (supercomplex SCI(1)III(2)IV(1) and megacomplex MCI(2)III(2)IV(2)).

The protein resides in the mitochondrion inner membrane. It carries out the reaction 4 Fe(II)-[cytochrome c] + O2 + 8 H(+)(in) = 4 Fe(III)-[cytochrome c] + 2 H2O + 4 H(+)(out). Functionally, component of the cytochrome c oxidase, the last enzyme in the mitochondrial electron transport chain which drives oxidative phosphorylation. The respiratory chain contains 3 multisubunit complexes succinate dehydrogenase (complex II, CII), ubiquinol-cytochrome c oxidoreductase (cytochrome b-c1 complex, complex III, CIII) and cytochrome c oxidase (complex IV, CIV), that cooperate to transfer electrons derived from NADH and succinate to molecular oxygen, creating an electrochemical gradient over the inner membrane that drives transmembrane transport and the ATP synthase. Cytochrome c oxidase is the component of the respiratory chain that catalyzes the reduction of oxygen to water. Electrons originating from reduced cytochrome c in the intermembrane space (IMS) are transferred via the dinuclear copper A center (CU(A)) of subunit 2 and heme A of subunit 1 to the active site in subunit 1, a binuclear center (BNC) formed by heme A3 and copper B (CU(B)). The BNC reduces molecular oxygen to 2 water molecules using 4 electrons from cytochrome c in the IMS and 4 protons from the mitochondrial matrix. The chain is Cytochrome c oxidase subunit 3 (mt-co3) from Polypterus ornatipinnis (Ornate bichir).